Consider the following 70-residue polypeptide: Small ribosomal subunit protein bS21 (70 aa).

The protein belongs to the bacterial ribosomal protein bS21 family.

This Helicobacter acinonychis (strain Sheeba) protein is Small ribosomal subunit protein bS21.